The primary structure comprises 4128 residues: DNA-dependent protein kinase catalytic subunit (4128 aa).

N6-acetyllysine is present on Lys117. The stretch at 288–323 (DNYVSLFEVLLKWCAHTNVELKKAALSALESFLKQV) is one HEAT 1 repeat. Phosphoserine occurs at positions 511 and 687. At Lys828 the chain carries N6-acetyllysine. Ser841 and Ser893 each carry phosphoserine. The HEAT 2 repeat unit spans residues 1004–1040 (QDTVALLEAILDGIVDPVDSTLRDFCGRCIREFLKWS). Ser1065 carries the post-translational modification Phosphoserine. N6-acetyllysine is present on Lys1209. Positions 1503 to 1538 (LDLSCKQLASGLLELAFAFGGLCERLVSLLLNPAVL) are interaction with C1D. The leucine-zipper stretch occupies residues 1503–1538 (LDLSCKQLASGLLELAFAFGGLCERLVSLLLNPAVL). The TPR 1 repeat unit spans residues 1723–1756 (PMQSREFPPGTPRFNNYVDCMKKFLDALELSQSP). Lys1970 bears the N6-acetyllysine mark. A disordered region spans residues 2050–2073 (QSYSYSSQDPRPATGRFRRREQRD). Ser2056 is subject to Phosphoserine; by autocatalysis. Position 2259 is an N6-acetyllysine (Lys2259). The segment at 2436–3212 (LDIIYKMMPK…DNSMNVDQDG (777 aa)) is KIP-binding. Thr2535 is modified (phosphothreonine). The residue at position 2609 (Thr2609) is a Phosphothreonine; by autocatalysis. Ser2612 bears the Phosphoserine; by autocatalysis mark. A phosphothreonine; by autocatalysis mark is found at Thr2638 and Thr2647. Positions 2737 to 2765 (EKLSLMYARKGVAEQKREKEIKSELKMKQ) are may split the end of the DNA molecule, with the two strands separating around the region. Ser2789 bears the Phosphoserine mark. An FAT domain is found at 2906-3539 (PAKRVRGKAR…VYPFIISSES (634 aa)). 2 TPR repeats span residues 2920–2948 (VLRWVELAKLYRSIGEYDVLRGIFTSEIG) and 2949–2982 (TKQITQSALLAEARSDYSEAAKQYDEALNKQDWV). The tract at residues 3200–3222 (LPEDNSMNVDQDGDPSDRMEVQE) is disordered. At Ser3205 the chain carries Phosphoserine. N6-acetyllysine occurs at positions 3241, 3260, 3621, 3638, and 3642. The PI3K/PI4K catalytic domain occupies 3722-4053 (FDERVTVMAS…ICYAKRKLAG (332 aa)). Residues 3728 to 3734 (VMASLRR) form a G-loop region. Ser3731 and Ser3821 each carry phosphoserine. Residues 3919–3927 (GIGDRHLNN) are catalytic loop. The interval 3939-3964 (GIDFGHAFGSATQFLPVPELMPFRLT) is activation loop. At Ser4026 the chain carries Phosphoserine. An FATC domain is found at 4096–4128 (SGLSEETQVKCLMDQATDPNILGRTWEGWEPWM).

It belongs to the PI3/PI4-kinase family. DNA-PK is a heterotrimer of PRKDC and the Ku dimer (composed of XRCC6/Ku70 and XRCC5/Ku86). Formation of this complex may be promoted by interaction with ILF3. Component of the core long-range non-homologous end joining (NHEJ) complex (also named DNA-PK complex) composed of PRKDC, LIG4, XRCC4, XRCC6/Ku70, XRCC5/Ku86 and NHEJ1/XLF. Additional component of the NHEJ complex includes PAXX. Following autophosphorylation, PRKDC dissociates from DNA. Interacts with DNA-PKcs-interacting protein (KIP) with the region upstream the kinase domain. PRKDC alone also interacts with and phosphorylates DCLRE1C, thereby activating the latent endonuclease activity of this protein. Interacts with C1D. Interacts with TTI1 and TELO2. Interacts with CIB1. Interacts with SETX. Interacts with NR4A3; the DNA-dependent protein kinase complex DNA-PK phosphorylates and activates NR4A3 and prevents NR4A3 ubiquitination and degradation. Interacts with BRAT1. Part of the HDP-RNP complex composed of at least HEXIM1, PRKDC, XRCC5, XRCC6, paraspeckle proteins (SFPQ, NONO, PSPC1, RBM14, and MATR3) and NEAT1 RNA. Interacts with KAT5. Autophosphorylated at two clusters, the T2609 cluster and the S2056 cluster. Autophosphorylated on Ser-2056, Thr-2609, Thr-2638 and Thr-2647. Ser-2056 and Thr-2609 are DNA damage-inducible phosphorylation sites (inducible with ionizing radiation, IR) dephosphorylated by PPP5C. Autophosphorylation induces a conformational change that leads to remodeling of the DNA-PK complex, requisite for efficient end processing and DNA repair. Autophosphorylation in trans within DNA-PK complexes loaded on DNA ends leads to the dissociation of PRKDC from DNA and the transition into the short-range NHEJ complex. Autophosphorylation of the T2609 cluster is required for hematopoietic development and protein synthesis in erythrocytes precursors. Post-translationally, S-nitrosylated by GAPDH. In terms of processing, polyubiquitinated by RNF144A, leading to proteasomal degradation.

The protein localises to the nucleus. The protein resides in the nucleolus. It localises to the cytoplasm. Its subcellular location is the cytosol. It carries out the reaction L-seryl-[protein] + ATP = O-phospho-L-seryl-[protein] + ADP + H(+). The catalysed reaction is L-threonyl-[protein] + ATP = O-phospho-L-threonyl-[protein] + ADP + H(+). Activity seems to be attenuated by autophosphorylation. Binding to the SL1 region of U3 small nucleolar RNA promotes auto-phosphorylation activity. Inhibited by wortmannin. Its function is as follows. Serine/threonine-protein kinase that acts as a molecular sensor for DNA damage. Involved in DNA non-homologous end joining (NHEJ) required for double-strand break (DSB) repair and V(D)J recombination. Must be bound to DNA to express its catalytic properties. Promotes processing of hairpin DNA structures in V(D)J recombination by activation of the hairpin endonuclease artemis (DCLRE1C). Recruited by XRCC5 and XRCC6 to DNA ends and is required to (1) protect and align broken ends of DNA, thereby preventing their degradation, (2) and sequester the DSB for repair by NHEJ. Acts as a scaffold protein to aid the localization of DNA repair proteins to the site of damage. The assembly of the DNA-PK complex at DNA ends is also required for the NHEJ ligation step. Found at the ends of chromosomes, suggesting a further role in the maintenance of telomeric stability and the prevention of chromosomal end fusion. Also involved in modulation of transcription. As part of the DNA-PK complex, involved in the early steps of ribosome assembly by promoting the processing of precursor rRNA into mature 18S rRNA in the small-subunit processome. Binding to U3 small nucleolar RNA, recruits PRKDC and XRCC5/Ku86 to the small-subunit processome. Recognizes the substrate consensus sequence [ST]-Q. Phosphorylates 'Ser-139' of histone variant H2AX, thereby regulating DNA damage response mechanism. Phosphorylates ASF1A, DCLRE1C, c-Abl/ABL1, histone H1, HSPCA, c-jun/JUN, p53/TP53, PARP1, POU2F1, DHX9, FH, SRF, NHEJ1/XLF, XRCC1, XRCC4, XRCC5, XRCC6, WRN, MYC and RFA2. Can phosphorylate C1D not only in the presence of linear DNA but also in the presence of supercoiled DNA. Ability to phosphorylate p53/TP53 in the presence of supercoiled DNA is dependent on C1D. Acts as a regulator of the phosphatidylinositol 3-kinase/protein kinase B signal transduction by mediating phosphorylation of 'Ser-473' of protein kinase B (PKB/AKT1, PKB/AKT2, PKB/AKT3), promoting their activation. Contributes to the determination of the circadian period length by antagonizing phosphorylation of CRY1 'Ser-588' and increasing CRY1 protein stability, most likely through an indirect mechanism. Plays a role in the regulation of DNA virus-mediated innate immune response by assembling into the HDP-RNP complex, a complex that serves as a platform for IRF3 phosphorylation and subsequent innate immune response activation through the cGAS-STING pathway. Also regulates the cGAS-STING pathway by catalyzing phosphorylation of CGAS, thereby impairing CGAS oligomerization and activation. Also regulates the cGAS-STING pathway by mediating phosphorylation of PARP1. The sequence is that of DNA-dependent protein kinase catalytic subunit (PRKDC) from Homo sapiens (Human).